Reading from the N-terminus, the 162-residue chain is MIOREX complex component 11 (162 aa).

The transit peptide at M1–L45 directs the protein to the mitochondrion. Over Q46–H84 the chain is Mitochondrial matrix. A helical membrane pass occupies residues I85–F105. Topologically, residues I106–K124 are mitochondrial intermembrane. The chain crosses the membrane as a helical span at residues G125–L142. Residues E143 to C162 are Mitochondrial matrix-facing.

Belongs to the MRX11 family. In terms of assembly, associates with the mitochondrial ribosome.

The protein localises to the mitochondrion. It is found in the mitochondrion inner membrane. Component of MIOREX complexes, large expressome-like assemblies of ribosomes with factors involved in all the steps of post-transcriptional gene expression. The sequence is that of MIOREX complex component 11 (mrx11) from Schizosaccharomyces pombe (strain 972 / ATCC 24843) (Fission yeast).